Reading from the N-terminus, the 1312-residue chain is Probable histone-lysine N-methyltransferase lin-59 (1312 aa).

Polar residues-rich tracts occupy residues 1-11 (MHGAGEQQQRY) and 25-36 (STSSHQYQQQGA). 5 disordered regions span residues 1-41 (MHGA…QMHQ), 54-81 (TTTSAAASTSSSGGSNSSGGSGGHRQQG), 154-223 (QPSG…KPVD), 312-435 (EESK…PPPV), and 524-556 (KDNIKKEVKEESTPPPTKLRGRLPSRRTREPSE). The span at 54–68 (TTTSAAASTSSSGGS) shows a compositional bias: low complexity. Residues 69–78 (NSSGGSGGHR) are compositionally biased toward gly residues. The segment covering 160-176 (PMSSNAPATTSSATPDS) has biased composition (low complexity). Residues 200–210 (DHDDEEDDDGP) show a composition bias toward acidic residues. Residues 312 to 321 (EESKKKKDME) are compositionally biased toward basic and acidic residues. A compositionally biased stretch (polar residues) spans 344–367 (ATRSTNSPDVTTSNLPEEPSTSTM). The span at 371–382 (KENEDVEKVEGK) shows a compositional bias: basic and acidic residues. The span at 383–394 (RRGRKPKKRRGF) shows a compositional bias: basic residues. Basic and acidic residues-rich tracts occupy residues 395–419 (HKESFEDLESDAKKSKAEQHEDHLP) and 524–535 (KDNIKKEVKEES). An AWS domain is found at 590-635 (APSLTCGCTKGACTSDMDCLNRALRVQCSSDCSVPYCSNRRFWKED). One can recognise an SET domain in the interval 638 to 750 (NKLCVSNGPR…PNAEITVDKS (113 aa)). The segment at 913–934 (DNAPRARALSTSCPSPVPSKRG) is disordered. The PHD-type zinc finger occupies 967 to 1027 (AVRCICGALD…EYICDFCTNK (61 aa)). The BAH domain maps to 1100–1223 (NKYRFPKAAT…KTQRVFEKVP (124 aa)). Residues 1248–1295 (RDFRPYDPSNPSPKPPKTSSIPSTSSIDPPQSSSDGLPEVDTKKLSKR) are disordered. The segment covering 1264-1281 (KTSSIPSTSSIDPPQSSS) has biased composition (low complexity).

This sequence belongs to the class V-like SAM-binding methyltransferase superfamily. Histone-lysine methyltransferase family. SET2 subfamily. Widely expressed throughout embryonic development and into adulthood.

The protein localises to the nucleus. The enzyme catalyses L-lysyl-[histone] + S-adenosyl-L-methionine = N(6)-methyl-L-lysyl-[histone] + S-adenosyl-L-homocysteine + H(+). Functionally, probable histone methyltransferase. Essential protein required to maintain expression of homeotic genes egl-5 and mab-5. May play an analogous role to the trithorax Group (trxG) proteins. TrxG proteins form multiprotein complexes that are required to maintain the transcriptionally active state of homeotic genes throughout development. May act via a modification of chromatin. This Caenorhabditis elegans protein is Probable histone-lysine N-methyltransferase lin-59 (lin-59).